Reading from the N-terminus, the 450-residue chain is FAD-linked oxidoreductase ptmO (450 aa).

The FAD-binding PCMH-type domain occupies 32–203 (PPELPYAIVR…TRFFIRTRPA (172 aa)).

Belongs to the oxygen-dependent FAD-linked oxidoreductase family. Requires FAD as cofactor.

It participates in secondary metabolite biosynthesis. FAD-linked oxidoreductase; part of the gene cluster that mediates the biosynthesis of the indole diterpenes penitrems. The geranylgeranyl diphosphate (GGPP) synthase ptmG catalyzes the first step in penitrem biosynthesis via conversion of farnesyl pyrophosphate and isopentyl pyrophosphate into geranylgeranyl pyrophosphate (GGPP). Condensation of indole-3-glycerol phosphate with GGPP by the prenyl transferase ptmC then forms 3-geranylgeranylindole (3-GGI). Epoxidation by the FAD-dependent monooxygenase ptmM leads to a epoxidized-GGI that is substrate of the terpene cyclase ptmB for cyclization to yield paspaline. Paspaline is subsequently converted to 13-desoxypaxilline by the cytochrome P450 monooxygenase ptmP, the latter being then converted to paxilline by the cytochrome P450 monooxygenase ptmQ. Paxilline is converted to beta-paxitriol via C-10 ketoreduction by the short-chain dehydrogenase ptmH which can be monoprenylated at the C-20 by the indole diterpene prenyltransferase ptmD. A two-step elimination (acetylation and elimination) process performed by the O-acetyltransferase ptmV and ptmI leads to the production of the prenylated form of penijanthine. The FAD-linked oxidoreductase ptmO then converts the prenylated form of penijanthine into PC-M5 which is in turn transformed into PC-M4 by the aromatic dimethylallyltransferase ptmE. Five sequential oxidative transformations performed by the cytochrome P450 monooxygenases ptmK, ptmU, ptmL, ptmN and ptmJ yield the various penitrem compounds. PtmK, ptmU and ptmM are involved in the formation of the key bicyclic ring of penitrem C via the formation of the intermediates secopenitrem D and penitrem D. PtmL catalyzes the epoxidation of penitrem D and C to yield penitrem B and F, respectively. PtmJ catalyzes the last benzylic hydroxylation to convert penitrem B to prenitrem E and penitrem F to penitrem A. The sequence is that of FAD-linked oxidoreductase ptmO from Penicillium ochrochloron.